The sequence spans 528 residues: Aurora kinase (528 aa).

Disordered stretches follow at residues 1-35 (MMLPRNSPHRTESTLAYNNNNSNNNNNNNGSSLFQ) and 48-235 (ISKP…KPQQ). 2 stretches are compositionally biased toward low complexity: residues 18–29 (NNNNSNNNNNNN) and 59–94 (HSHTFTTPTPKTRNTATTTTNNNNRNNHQYRNPNLN). Polar residues predominate over residues 95–104 (TSLVFTPTKN). Residues 105 to 120 (SSSSSSSHSSSLLSSS) are compositionally biased toward low complexity. The span at 129–155 (QPESNHTRATSHYRTTSTSQYKSSANK) shows a compositional bias: polar residues. Over residues 185-230 (TTTATQNTNNNKILNPSLSSSTIRFSTVSSSTSSSTTSSSSSSHTS) the composition is skewed to low complexity. Residues 242 to 515 (FEFGKILGKG…LKEVLNHNWI (274 aa)) form the Protein kinase domain. ATP is bound by residues 248–256 (LGKGKLGRV) and Lys-271. Asp-365 (proton acceptor) is an active-site residue.

The protein belongs to the protein kinase superfamily. Ser/Thr protein kinase family. Aurora subfamily.

It localises to the nucleus. It is found in the cytoplasm. The protein localises to the cytoskeleton. The protein resides in the spindle. Its subcellular location is the chromosome. It localises to the centromere. It is found in the kinetochore. The catalysed reaction is L-seryl-[protein] + ATP = O-phospho-L-seryl-[protein] + ADP + H(+). It catalyses the reaction L-threonyl-[protein] + ATP = O-phospho-L-threonyl-[protein] + ADP + H(+). Component of the chromosomal passenger complex (CPC), a complex that acts as a key regulator of chromosome segregation and cytokinesis. Has a role in error-correction of aberrent kinetochore-microtubule attachments to ensure that sister kinetochores become bioriented and connect to opposite poles by promoting spindle assembly checkpoint signaling. This chain is Aurora kinase (IPL1), found in Candida albicans (strain SC5314 / ATCC MYA-2876) (Yeast).